Consider the following 273-residue polypeptide: Dermonecrotic toxin LdSicTox-alphaIB1avi (273 aa).

His-5 is a catalytic residue. Mg(2+)-binding residues include Glu-25 and Asp-27. Catalysis depends on His-41, which acts as the Nucleophile. Intrachain disulfides connect Cys-45–Cys-51 and Cys-47–Cys-190. Asp-85 provides a ligand contact to Mg(2+). An N-linked (GlcNAc...) asparagine glycan is attached at Asn-250.

This sequence belongs to the arthropod phospholipase D family. Class II subfamily. Mg(2+) is required as a cofactor. In terms of tissue distribution, expressed by the venom gland.

The protein resides in the secreted. The catalysed reaction is an N-(acyl)-sphingosylphosphocholine = an N-(acyl)-sphingosyl-1,3-cyclic phosphate + choline. It catalyses the reaction an N-(acyl)-sphingosylphosphoethanolamine = an N-(acyl)-sphingosyl-1,3-cyclic phosphate + ethanolamine. It carries out the reaction a 1-acyl-sn-glycero-3-phosphocholine = a 1-acyl-sn-glycero-2,3-cyclic phosphate + choline. The enzyme catalyses a 1-acyl-sn-glycero-3-phosphoethanolamine = a 1-acyl-sn-glycero-2,3-cyclic phosphate + ethanolamine. Dermonecrotic toxins cleave the phosphodiester linkage between the phosphate and headgroup of certain phospholipids (sphingolipid and lysolipid substrates), forming an alcohol (often choline) and a cyclic phosphate. This toxin acts on sphingomyelin (SM). It may also act on ceramide phosphoethanolamine (CPE), lysophosphatidylcholine (LPC) and lysophosphatidylethanolamine (LPE), but not on lysophosphatidylserine (LPS), and lysophosphatidylglycerol (LPG). It acts by transphosphatidylation, releasing exclusively cyclic phosphate products as second products. Induces dermonecrosis, hemolysis, increased vascular permeability, edema, inflammatory response, and platelet aggregation. This is Dermonecrotic toxin LdSicTox-alphaIB1avi from Loxosceles deserta (Desert recluse spider).